The sequence spans 195 residues: Glycerol-3-phosphate acyltransferase (195 aa).

5 consecutive transmembrane segments (helical) span residues I3–L23, A53–I73, F80–F100, L115–F135, and I147–A167.

This sequence belongs to the PlsY family. As to quaternary structure, probably interacts with PlsX.

It localises to the cell inner membrane. It catalyses the reaction an acyl phosphate + sn-glycerol 3-phosphate = a 1-acyl-sn-glycero-3-phosphate + phosphate. It participates in lipid metabolism; phospholipid metabolism. Functionally, catalyzes the transfer of an acyl group from acyl-phosphate (acyl-PO(4)) to glycerol-3-phosphate (G3P) to form lysophosphatidic acid (LPA). This enzyme utilizes acyl-phosphate as fatty acyl donor, but not acyl-CoA or acyl-ACP. The protein is Glycerol-3-phosphate acyltransferase of Ehrlichia chaffeensis (strain ATCC CRL-10679 / Arkansas).